A 236-amino-acid chain; its full sequence is 2-C-methyl-D-erythritol 4-phosphate cytidylyltransferase (236 aa).

The protein belongs to the IspD/TarI cytidylyltransferase family. IspD subfamily. Homodimer.

The catalysed reaction is 2-C-methyl-D-erythritol 4-phosphate + CTP + H(+) = 4-CDP-2-C-methyl-D-erythritol + diphosphate. Its pathway is isoprenoid biosynthesis; isopentenyl diphosphate biosynthesis via DXP pathway; isopentenyl diphosphate from 1-deoxy-D-xylulose 5-phosphate: step 2/6. Its function is as follows. Catalyzes the formation of 4-diphosphocytidyl-2-C-methyl-D-erythritol from CTP and 2-C-methyl-D-erythritol 4-phosphate (MEP). This is 2-C-methyl-D-erythritol 4-phosphate cytidylyltransferase from Salmonella agona (strain SL483).